The sequence spans 340 residues: Methionine import ATP-binding protein MetN 2 (340 aa).

Residues 2–241 (ITLQNVVKEY…PKEKVTQRFV (240 aa)) form the ABC transporter domain. 38–45 (GYSGAGKS) contributes to the ATP binding site.

The protein belongs to the ABC transporter superfamily. Methionine importer (TC 3.A.1.24) family. As to quaternary structure, the complex is composed of two ATP-binding proteins (MetN), two transmembrane proteins (MetI) and a solute-binding protein (MetQ).

It is found in the cell membrane. The enzyme catalyses L-methionine(out) + ATP + H2O = L-methionine(in) + ADP + phosphate + H(+). It carries out the reaction D-methionine(out) + ATP + H2O = D-methionine(in) + ADP + phosphate + H(+). Its function is as follows. Part of the ABC transporter complex MetNIQ involved in methionine import. Responsible for energy coupling to the transport system. This chain is Methionine import ATP-binding protein MetN 2, found in Listeria innocua serovar 6a (strain ATCC BAA-680 / CLIP 11262).